A 490-amino-acid chain; its full sequence is Protein nucleotidyltransferase YdiU (490 aa).

Residues glycine 89, glycine 91, arginine 92, lysine 112, aspartate 124, glycine 125, arginine 175, and arginine 182 each contribute to the ATP site. The active-site Proton acceptor is aspartate 251. Mg(2+)-binding residues include asparagine 252 and aspartate 261. Aspartate 261 provides a ligand contact to ATP.

The protein belongs to the SELO family. It depends on Mg(2+) as a cofactor. The cofactor is Mn(2+).

The catalysed reaction is L-seryl-[protein] + ATP = 3-O-(5'-adenylyl)-L-seryl-[protein] + diphosphate. The enzyme catalyses L-threonyl-[protein] + ATP = 3-O-(5'-adenylyl)-L-threonyl-[protein] + diphosphate. It carries out the reaction L-tyrosyl-[protein] + ATP = O-(5'-adenylyl)-L-tyrosyl-[protein] + diphosphate. It catalyses the reaction L-histidyl-[protein] + UTP = N(tele)-(5'-uridylyl)-L-histidyl-[protein] + diphosphate. The catalysed reaction is L-seryl-[protein] + UTP = O-(5'-uridylyl)-L-seryl-[protein] + diphosphate. The enzyme catalyses L-tyrosyl-[protein] + UTP = O-(5'-uridylyl)-L-tyrosyl-[protein] + diphosphate. Functionally, nucleotidyltransferase involved in the post-translational modification of proteins. It can catalyze the addition of adenosine monophosphate (AMP) or uridine monophosphate (UMP) to a protein, resulting in modifications known as AMPylation and UMPylation. This is Protein nucleotidyltransferase YdiU from Vibrio vulnificus (strain YJ016).